Consider the following 195-residue polypeptide: AKDKEKKEKKDKKKDDAPAEEAPAAAAAPAEEAAPTPSAAPIHKVGNVFALFKQNQIQEFKEAFTMIDQDRDGIIGPDDLGNIFQQIGREVDPKVVKEMLAESAEKLNFTHFLTLFGEKLHGTDTEGTLRDAFALFDEDKLGYLLEEYVKDLLTNVGDQYNKDEIKQVWKEAPIEGGKFDYVKFVRLIKRGKEEE.

A compositionally biased stretch (basic and acidic residues) spans 1–17 (AKDKEKKEKKDKKKDDA). The segment at 1–39 (AKDKEKKEKKDKKKDDAPAEEAPAAAAAPAEEAAPTPSA) is disordered. The segment covering 20–39 (EEAPAAAAAPAEEAAPTPSA) has biased composition (low complexity). EF-hand domains follow at residues 55–90 (NQIQ…IGRE) and 124–159 (DTEG…VGDQ). Ca(2+) contacts are provided by Asp68, Asp70, Asp72, and Asp79.

Myosin is a hexamer of 2 heavy chains and 4 light chains.

Its function is as follows. Plays an important role in regulation of muscle cell contractile activity. The chain is Myosin regulatory light chain, striated muscle, 25 kDa isoform from Lumbricus terrestris (Common earthworm).